We begin with the raw amino-acid sequence, 1144 residues long: Adenylate cyclase type 3 (1144 aa).

Topologically, residues M1–L79 are cytoplasmic. Helical transmembrane passes span V80–F100, L105–C125, V139–F159, A173–I193, and I226–M246. Mg(2+) is bound by residues D324, I325, and D368. ATP is bound by residues D324–T329 and L366–D368. A helical membrane pass occupies residues E381–V401. Residues R402–S630 lie on the Cytoplasmic side of the membrane. ATP is bound at residue R412. K465 is covalently cross-linked (Glycyl lysine isopeptide (Lys-Gly) (interchain with G-Cter in SUMO3)). Residues Q504–R563 form a disordered region. Phosphoserine is present on S523. Residues G534–S543 show a composition bias toward low complexity. Phosphoserine is present on S578. A run of 3 helical transmembrane segments spans residues G631 to I651, F662 to P682, and W706 to L726. N-linked (GlcNAc...) asparagine glycosylation occurs at N734. 3 helical membrane passes run V755–L775, L777–F797, and L833–F853. Over Y854 to P1144 the chain is Cytoplasmic. ATP is bound by residues K975, D1062 to W1064, and N1069 to R1073. Residue S1076 is modified to Phosphoserine; by CaMK2. K1109 lines the ATP pocket.

This sequence belongs to the adenylyl cyclase class-4/guanylyl cyclase family. It depends on Mg(2+) as a cofactor. Mn(2+) serves as cofactor. N-glycosylated. Post-translationally, sumoylated. Sumoylation is required for targeting ot olfactory cilia. In terms of processing, rapidly phosphorylated after stimulation by odorants or forskolin. Phosphorylation by CaMK2 at Ser-1076 down-regulates enzyme activity. As to expression, detected on cilia on the olfactory epithelium (at protein level). Detected on cilia on the olfactory epithelium.

It is found in the cell membrane. Its subcellular location is the golgi apparatus. It localises to the cell projection. The protein localises to the cilium. The protein resides in the cytoplasm. The enzyme catalyses ATP = 3',5'-cyclic AMP + diphosphate. With respect to regulation, specifically activated by the G alpha protein GNAL/G(olf) in signaling cascades triggered by odorant receptors. Activated by forskolin. After forskolin treatment, activity is further increased by calcium/calmodulin. In the absence of forskolin, calcium/calmodulin has little effect on enzyme activity. Catalyzes the formation of the signaling molecule cAMP in response to G-protein signaling. Participates in signaling cascades triggered by odorant receptors via its function in cAMP biosynthesis: specifically activated by G alpha protein GNAL/G(olf) in olfactory epithelium. Required for the perception of odorants. Required for normal sperm motility and normal male fertility. Plays a role in regulating insulin levels and body fat accumulation in response to a high fat diet. The sequence is that of Adenylate cyclase type 3 from Rattus norvegicus (Rat).